Here is a 274-residue protein sequence, read N- to C-terminus: MIIARTVRELQEAKKELNGSIGFVPTMGALHQGHLSLIQQAKKENDHLIVSIFVNPTQFLEGEDLNAYPRREEADRKICEVAGVDIVFMPEIGQMYEKDELCIGAPAIRGYILEGEKRPGHFDGMLQVVMKLLNLSSATRAYFGKKDAQQLSLITQMVKNYFMDVQIIPCEIIRDEYGLALSSRNVYLNEEEKHRALALSRSLKRATKMVMQGELDVEAIKKEMMQVLSETDRVEYIAIVDRQFKALEKVQIGNTIILVAAWIGKPRLIDNIWI.

Residue 27–34 participates in ATP binding; it reads MGALHQGH. His34 functions as the Proton donor in the catalytic mechanism. Residue Gln58 coordinates (R)-pantoate. Gln58 serves as a coordination point for beta-alanine. 144 to 147 contacts ATP; it reads GKKD. A (R)-pantoate-binding site is contributed by Gln150. Residues Ile173 and 181–184 each bind ATP; that span reads LSSR.

It belongs to the pantothenate synthetase family. In terms of assembly, homodimer.

Its subcellular location is the cytoplasm. The enzyme catalyses (R)-pantoate + beta-alanine + ATP = (R)-pantothenate + AMP + diphosphate + H(+). It functions in the pathway cofactor biosynthesis; (R)-pantothenate biosynthesis; (R)-pantothenate from (R)-pantoate and beta-alanine: step 1/1. In terms of biological role, catalyzes the condensation of pantoate with beta-alanine in an ATP-dependent reaction via a pantoyl-adenylate intermediate. The polypeptide is Pantothenate synthetase (Sulfurovum sp. (strain NBC37-1)).